The sequence spans 352 residues: Replication-associated protein (352 aa).

The CRESS-DNA virus Rep endonuclease domain maps to 9–117; it reads QINAKNYFLT…DGDTLVWGEF (109 aa). The RCR-1 signature appears at 16-19; the sequence is FLTY. Glutamate 50, histidine 58, and histidine 60 together coordinate a divalent metal cation. The RCR-2 motif lies at 58–60; sequence HLH. The active-site For DNA cleavage activity is the tyrosine 104. Residues 104 to 107 carry the RCR-3 motif; that stretch reads YIDK. Residue aspartate 108 coordinates a divalent metal cation. Positions 144–154 are binding to RBR1; it reads KEEALQIIREK. Residues 157-177 are oligomerization; sequence EKYLFQFHNLNSNLDRIFDKT. 223-230 contributes to the ATP binding site; sequence GDSRTGKT.

Belongs to the geminiviridae Rep protein family. Homooligomer. Interacts with the replication enhancer protein (REn). Interacts with host retinoblastoma-related protein 1 (RBR1), and may thereby induce the transcription of host replicative enzymes even if the cell is not dividing anymore. Interacts with host PCNA. Interacts with host SCE1 protein. Interacts with host GRIK1, GRIK2, GRIMP and histone H3. It depends on Mg(2+) as a cofactor. Requires Mn(2+) as cofactor.

The protein localises to the host nucleus. In terms of biological role, essential for the replication of viral ssDNA. The closed circular ssDNA genome is first converted to a superhelical dsDNA. Rep binds a specific region at the genome origin of replication. It introduces an endonucleolytic nick within the conserved sequence 5'-TAATATTAC-3' in the intergenic region of the genome present in all geminiviruses, thereby initiating the rolling circle replication (RCR). Following cleavage, binds covalently to the 5'-phosphate of DNA as a tyrosyl ester. The cleavage gives rise to a free 3'-OH that serves as a primer for the cellular DNA polymerase. The polymerase synthesizes the (+) strand DNA by rolling circle mechanism. After one round of replication, a Rep-catalyzed nucleotidyl transfer reaction releases a circular single-stranded virus genome, thereby terminating the replication. Displays origin-specific DNA cleavage, nucleotidyl transferase, ATPase and helicase activities. The sequence is that of Replication-associated protein from Solanum lycopersicum (Tomato).